Reading from the N-terminus, the 434-residue chain is Methylenetetrahydrofolate--tRNA-(uracil-5-)-methyltransferase TrmFO (434 aa).

10 to 15 is an FAD binding site; sequence GAGLAG.

The protein belongs to the MnmG family. TrmFO subfamily. FAD is required as a cofactor.

The protein resides in the cytoplasm. It carries out the reaction uridine(54) in tRNA + (6R)-5,10-methylene-5,6,7,8-tetrahydrofolate + NADH + H(+) = 5-methyluridine(54) in tRNA + (6S)-5,6,7,8-tetrahydrofolate + NAD(+). The enzyme catalyses uridine(54) in tRNA + (6R)-5,10-methylene-5,6,7,8-tetrahydrofolate + NADPH + H(+) = 5-methyluridine(54) in tRNA + (6S)-5,6,7,8-tetrahydrofolate + NADP(+). In terms of biological role, catalyzes the folate-dependent formation of 5-methyl-uridine at position 54 (M-5-U54) in all tRNAs. The sequence is that of Methylenetetrahydrofolate--tRNA-(uracil-5-)-methyltransferase TrmFO from Bacillus cereus (strain G9842).